Consider the following 365-residue polypeptide: 2'-hydroxybiphenyl-2-sulfinate desulfinase (365 aa).

Residue Cys27 is part of the active site. The 2'-hydroxybiphenyl-2-sulfinate site is built by Cys27, His60, and Arg70. Arg70 is a catalytic residue.

The protein belongs to the DszB desulfinase family. Monomer.

The protein resides in the cytoplasm. The enzyme catalyses 2'-hydroxybiphenyl-2-sulfinate + H2O = biphenyl-2-ol + sulfite + H(+). It participates in sulfur metabolism; dibenzothiophene degradation. Functionally, catalyzes the third and final step of the '4S' desulfurization pathway that removes covalently bound sulfur from dibenzothiophene (DBT) without breaking carbon-carbon bonds. Oxidizes 2-(2'-hydroxyphenyl)benzene sulphinate (HBPS) to 2-hydroxybiphenyl (HBP) plus sulfite. The rate-limiting step of the '4S' desulfurization pathway. This chain is 2'-hydroxybiphenyl-2-sulfinate desulfinase, found in Rhodococcus erythropolis (Arthrobacter picolinophilus).